The sequence spans 72 residues: Prokaryotic ubiquitin-like protein Pup (72 aa).

Positions 1 to 10 (MATKDTGGGQ) are enriched in gly residues. The tract at residues 1 to 45 (MATKDTGGGQQKATRSTEEVEEQAQDAQASEDLKERQEKLSDDVD) is disordered. The stretch at 10-60 (QQKATRSTEEVEEQAQDAQASEDLKERQEKLSDDVDSVLDEIDDVLEENAE) forms a coiled coil. Residues 28–66 (QASEDLKERQEKLSDDVDSVLDEIDDVLEENAEDFVRSF) are ARC ATPase binding. A compositionally biased stretch (basic and acidic residues) spans 31 to 42 (EDLKERQEKLSD). An Isoglutamyl lysine isopeptide (Glu-Lys) (interchain with K-? in acceptor proteins) cross-link involves residue E72.

This sequence belongs to the prokaryotic ubiquitin-like protein family. As to quaternary structure, strongly interacts with the proteasome-associated ATPase ARC through a hydrophobic interface; the interacting region of Pup lies in its C-terminal half. There is one Pup binding site per ARC hexamer ring.

It participates in protein degradation; proteasomal Pup-dependent pathway. Functionally, protein modifier that is covalently attached to lysine residues of substrate proteins, thereby targeting them for proteasomal degradation. The tagging system is termed pupylation. This chain is Prokaryotic ubiquitin-like protein Pup, found in Streptomyces coelicolor (strain ATCC BAA-471 / A3(2) / M145).